The sequence spans 367 residues: Inositol-3-phosphate synthase (367 aa).

Residues Asp78, Ala137, Tyr157, Ser200, Asp235, and Lys248 each coordinate NAD(+).

Belongs to the myo-inositol 1-phosphate synthase family. It depends on NAD(+) as a cofactor.

The catalysed reaction is D-glucose 6-phosphate = 1D-myo-inositol 3-phosphate. Its function is as follows. Key enzyme in myo-inositol biosynthesis pathway that catalyzes the conversion of glucose 6-phosphate to 1D-myo-inositol 3-phosphate in a NAD-dependent manner. This Mycobacterium tuberculosis (strain CDC 1551 / Oshkosh) protein is Inositol-3-phosphate synthase (ino1).